We begin with the raw amino-acid sequence, 369 residues long: Cobalt-precorrin-5B C(1)-methyltransferase (369 aa).

The protein belongs to the CbiD family.

The catalysed reaction is Co-precorrin-5B + S-adenosyl-L-methionine = Co-precorrin-6A + S-adenosyl-L-homocysteine. Its pathway is cofactor biosynthesis; adenosylcobalamin biosynthesis; cob(II)yrinate a,c-diamide from sirohydrochlorin (anaerobic route): step 6/10. In terms of biological role, catalyzes the methylation of C-1 in cobalt-precorrin-5B to form cobalt-precorrin-6A. The sequence is that of Cobalt-precorrin-5B C(1)-methyltransferase from Prosthecochloris aestuarii (strain DSM 271 / SK 413).